Here is a 798-residue protein sequence, read N- to C-terminus: Cold shock domain-containing protein E1 (798 aa).

The CSD 1 domain maps to 26–87 (ETGVIEKLLT…RTGKPIAIKL (62 aa)). At K81 the chain carries N6-acetyllysine. K91 is covalently cross-linked (Glycyl lysine isopeptide (Lys-Gly) (interchain with G-Cter in SUMO2)). S123 carries the post-translational modification Phosphoserine. One can recognise a CSD 2; truncated domain in the interval 136–179 (VFYLTYTSEDVEGNVQLETGDKINFVIDNNKHTGAVSARNIMLL). Residues 186–245 (CQGVVCAMKEAFGFIERGDVVKEIFFHYSEFKGDLETLQPGDDVEFTIKDRNGKEVATDV) enclose the CSD 3 domain. The residue at position 276 (S276) is a Phosphoserine. The CSD 4; truncated domain maps to 297-337 (LPFGDKDTKSKVTLLEGDHVRFNISTDRRDKLERATNIEVL). 2 consecutive CSD domains span residues 349–410 (EMGV…AIRI) and 447–507 (NKGK…ATCV). Phosphoserine is present on S514. The region spanning 519-579 (LLGYVATLKD…KGNKVSAEKV (61 aa)) is the CSD 7 domain. Position 584 is a phosphoserine (S584). 2 CSD domains span residues 610-670 (PTQI…AYNI) and 674-735 (RRAT…ACNV). The region spanning 748–789 (PRPDRLVNRLKNITLDDASAPRLMVLRQPRGPDNSMGFGAER) is the SUZ-C domain. T761 bears the Phosphothreonine mark.

It belongs to the UNR family. In terms of assembly, component of a multi subunit autoregulatory ribonucleoprotein complex (ARC), at least composed of IGF2BP1, PABPC1 and CSDE1. Interacts with STRAP. Part of a complex associated with the FOS mCRD domain and consisting of PABPC1, PAIP1, HNRPD and SYNCRIP. The interaction with PABPC1 is direct and RNA-independent. Interacts with EIF4ENIF1/4E-T.

The protein localises to the cytoplasm. Its subcellular location is the stress granule. It is found in the P-body. RNA-binding protein involved in translationally coupled mRNA turnover. Implicated with other RNA-binding proteins in the cytoplasmic deadenylation/translational and decay interplay of the FOS mRNA mediated by the major coding-region determinant of instability (mCRD) domain. Required for efficient formation of stress granules. The chain is Cold shock domain-containing protein E1 from Mus musculus (Mouse).